The chain runs to 397 residues: Argininosuccinate synthase (397 aa).

Residues 9–17 (AFSGGLDTS) and Ala35 contribute to the ATP site. Positions 88 and 93 each coordinate L-citrulline. Gly117 is an ATP binding site. Positions 119, 123, and 124 each coordinate L-aspartate. Residue Asn123 participates in L-citrulline binding. Arg127 contributes to the L-citrulline binding site.

This sequence belongs to the argininosuccinate synthase family. Type 1 subfamily. Homotetramer.

It localises to the cytoplasm. The catalysed reaction is L-citrulline + L-aspartate + ATP = 2-(N(omega)-L-arginino)succinate + AMP + diphosphate + H(+). It participates in amino-acid biosynthesis; L-arginine biosynthesis; L-arginine from L-ornithine and carbamoyl phosphate: step 2/3. The polypeptide is Argininosuccinate synthase (Xanthomonas campestris pv. campestris (strain ATCC 33913 / DSM 3586 / NCPPB 528 / LMG 568 / P 25)).